The primary structure comprises 67 residues: Putative cytosolic sulfotransferase 2 (67 aa).

31 to 33 (RDG) contacts 3'-phosphoadenylyl sulfate.

The protein belongs to the sulfotransferase 1 family.

It is found in the cytoplasm. In terms of biological role, sulfotransferase that utilizes 3'-phospho-5'-adenylyl sulfate (PAPS) as sulfonate donor. In Arabidopsis thaliana (Mouse-ear cress), this protein is Putative cytosolic sulfotransferase 2 (SOT2).